Consider the following 46-residue polypeptide: MKVLSSLASAKTRYPDCQVVRRRGRVYVICKSNPRFKAVQGRKKRR.

It belongs to the bacterial ribosomal protein bL36 family.

This is Large ribosomal subunit protein bL36A from Sodalis glossinidius (strain morsitans).